Consider the following 420-residue polypeptide: Maturation protein A2 (420 aa).

RNA-binding stretches follow at residues 158 to 176 (IKYL…RAVK), 226 to 236 (QNRHDKIQRLL), and 294 to 298 (PVSDW).

The protein belongs to the Leviviricetes maturation protein family. As to quaternary structure, interacts with host MurA; this interaction inhibits the first step in host cell wall synthesis. Interacts with the capsid protein.

The protein resides in the virion. In terms of biological role, induces host cell lysis. Inhibits host MurA activity thereby blocking the synthesis of murein precursors necessary for the host cell wall biosynthesis. May be responsible for the attachment to the host pilus. Makes extensive contacts with the viral genome. The chain is Maturation protein A2 from Escherichia virus Qbeta (Bacteriophage Q-beta).